We begin with the raw amino-acid sequence, 346 residues long: Enkurin domain-containing protein 1 (346 aa).

The segment at 1–35 (MCEGPSRISGPIPPDPTLCPDNYRRPTSAQGRLEG) is disordered. Phosphoserine is present on S91. A required for binding to microtubules region spans residues 91-171 (SLKRKDPKDH…AHFLRAHSRC (81 aa)). Positions 114–125 (RFREQERSREQG) are enriched in basic and acidic residues. Disordered stretches follow at residues 114 to 137 (RFREQERSREQGQPRPLKALWRSP), 167 to 197 (AHSRCGPGLPPPHVSSPQPTPPGPEAKEPGL), and 260 to 280 (AEARKQSQPDPAMPPGHTRMP). At S136 the chain carries Phosphoserine. Residues 174 to 190 (GLPPPHVSSPQPTPPGP) show a composition bias toward pro residues. The region spanning 251 to 343 (ERRDLWRREA…IFSRPKVFVK (93 aa)) is the Enkurin domain.

As to quaternary structure, interacts with alpha-tubulin. Interacts (via central region) with CCP110 (via N-terminal region); competes with CEP97 for binding to CCP110.

The protein resides in the cytoplasm. It is found in the cytoskeleton. It localises to the microtubule organizing center. Its subcellular location is the centrosome. The protein localises to the centriole. The protein resides in the cilium basal body. It is found in the cell projection. It localises to the cilium. Its subcellular location is the spindle. The protein localises to the spindle pole. The protein resides in the cilium axoneme. Microtubule-binding protein which regulates microtubule organization and stability. Promotes the stability of astral microtubules and facilitates the proper orientation of the mitotic spindle. This allows the oriented division of basal keratinocytes and contributes to epidermal stratification. Required for the assembly of both primary and motile cilia. Destabilizes the interaction between CCP110 and CEP97 by competing with CEP97 for binding to CCP110 which promotes the removal of CCP110 and CEP97 from the mother centriole and allows the initiation of ciliogenesis. The protein is Enkurin domain-containing protein 1 (ENKD1) of Homo sapiens (Human).